Here is a 368-residue protein sequence, read N- to C-terminus: Protein mab-21-like (368 aa).

Belongs to the mab-21 family.

The protein is Protein mab-21-like of Drosophila pseudoobscura pseudoobscura (Fruit fly).